A 376-amino-acid polypeptide reads, in one-letter code: Chaperone protein DnaJ (376 aa).

The J domain occupies 5-70 (DYYEVLGVGR…DKKAAYDQFG (66 aa)). The CR-type zinc-finger motif lies at 132–210 (GLTKELRIPT…CHGDGRVEKS (79 aa)). Residues C145, C148, C162, C165, C184, C187, C198, and C201 each coordinate Zn(2+). 4 CXXCXGXG motif repeats span residues 145–152 (CDLCDGSG), 162–169 (CTTCHGQG), 184–191 (CPTCHGRG), and 198–205 (CTKCHGDG).

The protein belongs to the DnaJ family. As to quaternary structure, homodimer. The cofactor is Zn(2+).

Its subcellular location is the cytoplasm. Functionally, participates actively in the response to hyperosmotic and heat shock by preventing the aggregation of stress-denatured proteins and by disaggregating proteins, also in an autonomous, DnaK-independent fashion. Unfolded proteins bind initially to DnaJ; upon interaction with the DnaJ-bound protein, DnaK hydrolyzes its bound ATP, resulting in the formation of a stable complex. GrpE releases ADP from DnaK; ATP binding to DnaK triggers the release of the substrate protein, thus completing the reaction cycle. Several rounds of ATP-dependent interactions between DnaJ, DnaK and GrpE are required for fully efficient folding. Also involved, together with DnaK and GrpE, in the DNA replication of plasmids through activation of initiation proteins. The chain is Chaperone protein DnaJ from Shewanella putrefaciens (strain CN-32 / ATCC BAA-453).